A 242-amino-acid chain; its full sequence is Thaumatin-like protein 2 (242 aa).

An N-terminal signal peptide occupies residues 1–23 (MMKTLGAVLSLSLTLLSFGGAHA). Intrachain disulfides connect cysteine 32–cysteine 241, cysteine 77–cysteine 87, cysteine 92–cysteine 99, cysteine 147–cysteine 230, cysteine 152–cysteine 213, cysteine 160–cysteine 176, cysteine 180–cysteine 189, and cysteine 190–cysteine 200.

Belongs to the thaumatin family. In terms of tissue distribution, preferentially expressed in the abscission zone of fruit. Also expressed in leaf abscission zone.

The protein resides in the secreted. In terms of biological role, may be involved in protecting plant tissues from pathogen infection. This chain is Thaumatin-like protein 2, found in Prunus persica (Peach).